Here is a 449-residue protein sequence, read N- to C-terminus: Glucose-6-phosphate isomerase (449 aa).

The Proton donor role is filled by Glu-291. Residues His-312 and Lys-426 contribute to the active site.

This sequence belongs to the GPI family.

Its subcellular location is the cytoplasm. The enzyme catalyses alpha-D-glucose 6-phosphate = beta-D-fructose 6-phosphate. It functions in the pathway carbohydrate biosynthesis; gluconeogenesis. Its pathway is carbohydrate degradation; glycolysis; D-glyceraldehyde 3-phosphate and glycerone phosphate from D-glucose: step 2/4. Functionally, catalyzes the reversible isomerization of glucose-6-phosphate to fructose-6-phosphate. In Clostridium botulinum (strain Alaska E43 / Type E3), this protein is Glucose-6-phosphate isomerase.